Here is a 475-residue protein sequence, read N- to C-terminus: Beta-amyrin 16-alpha-hydroxylase CYP87D16 (475 aa).

Residues 3–23 (VVGLIGVAVVTILITQYVYKW) form a helical membrane-spanning segment. Cys-423 is a binding site for heme.

This sequence belongs to the cytochrome P450 family. It depends on heme as a cofactor.

The protein localises to the membrane. The catalysed reaction is beta-amyrin + reduced [NADPH--hemoprotein reductase] + O2 = 16alpha-hydroxy-beta-amyrin + oxidized [NADPH--hemoprotein reductase] + H2O + H(+). Its function is as follows. Involved in the biosynthetic pathway of maesasaponins, which are oleanane-type saponins with diverse biological activities. Catalyzes the C-16alpha oxidation of beta-amyrin to form 16alpha-hydroxy-beta-amyrin. The polypeptide is Beta-amyrin 16-alpha-hydroxylase CYP87D16 (Maesa lanceolata (False assegai)).